Here is a 143-residue protein sequence, read N- to C-terminus: MEYQGQTGHATTDKVEEYGQPVAGHGGATGGPTGTHGAAAAAAGTGQLQPTRDDHKTDGVLRRSGSSSSSSSEDDGVGGRRKKGMKEKIKEKLPGGAHKDAAGQQHTPAAGEYAGTGTHGAEATGEKKGVMDKIKEKLPGGQH.

Residues 1–10 (MEYQGQTGHA) are compositionally biased toward polar residues. The tract at residues 1–143 (MEYQGQTGHA…IKEKLPGGQH (143 aa)) is disordered. The span at 24–34 (GHGGATGGPTG) shows a compositional bias: gly residues. Positions 35 to 46 (THGAAAAAAGTG) are enriched in low complexity. The segment covering 51–61 (TRDDHKTDGVL) has biased composition (basic and acidic residues). Residues 62 to 71 (RRSGSSSSSS) are compositionally biased toward low complexity. Basic and acidic residues predominate over residues 86–101 (KEKIKEKLPGGAHKDA). A compositionally biased stretch (low complexity) spans 109-123 (AAGEYAGTGTHGAEA). Positions 124–143 (TGEKKGVMDKIKEKLPGGQH) are enriched in basic and acidic residues.

The protein belongs to the plant dehydrin family.

In Hordeum vulgare (Barley), this protein is Dehydrin DHN2 (DHN2).